The following is a 278-amino-acid chain: Large ribosomal subunit protein uL2 (278 aa).

2 disordered regions span residues Lys-28–Gly-56 and Arg-221–Arg-278. Positions Ile-269 to Arg-278 are enriched in basic residues.

This sequence belongs to the universal ribosomal protein uL2 family. Part of the 50S ribosomal subunit. Forms a bridge to the 30S subunit in the 70S ribosome.

Functionally, one of the primary rRNA binding proteins. Required for association of the 30S and 50S subunits to form the 70S ribosome, for tRNA binding and peptide bond formation. It has been suggested to have peptidyltransferase activity; this is somewhat controversial. Makes several contacts with the 16S rRNA in the 70S ribosome. The polypeptide is Large ribosomal subunit protein uL2 (Rhizorhabdus wittichii (strain DSM 6014 / CCUG 31198 / JCM 15750 / NBRC 105917 / EY 4224 / RW1) (Sphingomonas wittichii)).